A 291-amino-acid polypeptide reads, in one-letter code: Pyridoxal 5'-phosphate synthase subunit PdxS (291 aa).

D-ribose 5-phosphate is bound at residue D23. K80 acts as the Schiff-base intermediate with D-ribose 5-phosphate in catalysis. A D-ribose 5-phosphate-binding site is contributed by G152. R164 lines the D-glyceraldehyde 3-phosphate pocket. D-ribose 5-phosphate-binding positions include G213 and 234 to 235 (GS).

This sequence belongs to the PdxS/SNZ family. In the presence of PdxT, forms a dodecamer of heterodimers.

It carries out the reaction aldehydo-D-ribose 5-phosphate + D-glyceraldehyde 3-phosphate + L-glutamine = pyridoxal 5'-phosphate + L-glutamate + phosphate + 3 H2O + H(+). It participates in cofactor biosynthesis; pyridoxal 5'-phosphate biosynthesis. Its function is as follows. Catalyzes the formation of pyridoxal 5'-phosphate from ribose 5-phosphate (RBP), glyceraldehyde 3-phosphate (G3P) and ammonia. The ammonia is provided by the PdxT subunit. Can also use ribulose 5-phosphate and dihydroxyacetone phosphate as substrates, resulting from enzyme-catalyzed isomerization of RBP and G3P, respectively. This is Pyridoxal 5'-phosphate synthase subunit PdxS from Streptococcus pneumoniae (strain P1031).